The chain runs to 148 residues: MEKTFLMVKPDGVQRELIGEIVKRFETKGYKLAGAKLMQVSNQLAETHYSEHKERPFFGELVDFITSGPVFAMVWEGENVIATARKMMGKTNPLEADPSTIRGDFGISVGKNIIHGSDSAESAEREITLFFTENEIVSYEKQANNWIY.

Lysine 9, phenylalanine 57, arginine 85, threonine 91, arginine 102, and asparagine 112 together coordinate ATP. A Phosphothreonine modification is found at threonine 91. Histidine 115 serves as the catalytic Pros-phosphohistidine intermediate. Serine 122 carries the phosphoserine modification.

The protein belongs to the NDK family. In terms of assembly, homotetramer. It depends on Mg(2+) as a cofactor.

It localises to the cytoplasm. It catalyses the reaction a 2'-deoxyribonucleoside 5'-diphosphate + ATP = a 2'-deoxyribonucleoside 5'-triphosphate + ADP. The catalysed reaction is a ribonucleoside 5'-diphosphate + ATP = a ribonucleoside 5'-triphosphate + ADP. Its function is as follows. Major role in the synthesis of nucleoside triphosphates other than ATP. The ATP gamma phosphate is transferred to the NDP beta phosphate via a ping-pong mechanism, using a phosphorylated active-site intermediate. This is Nucleoside diphosphate kinase from Oceanobacillus iheyensis (strain DSM 14371 / CIP 107618 / JCM 11309 / KCTC 3954 / HTE831).